A 263-amino-acid chain; its full sequence is 3-methyl-2-oxobutanoate hydroxymethyltransferase (263 aa).

Mg(2+) is bound by residues D45 and D84. 3-methyl-2-oxobutanoate contacts are provided by residues 45–46, D84, and K112; that span reads DS. A Mg(2+)-binding site is contributed by E114. Catalysis depends on E180, which acts as the Proton acceptor.

This sequence belongs to the PanB family. As to quaternary structure, homodecamer; pentamer of dimers. Mg(2+) serves as cofactor.

The protein resides in the cytoplasm. It carries out the reaction 3-methyl-2-oxobutanoate + (6R)-5,10-methylene-5,6,7,8-tetrahydrofolate + H2O = 2-dehydropantoate + (6S)-5,6,7,8-tetrahydrofolate. Its pathway is cofactor biosynthesis; (R)-pantothenate biosynthesis; (R)-pantoate from 3-methyl-2-oxobutanoate: step 1/2. In terms of biological role, catalyzes the reversible reaction in which hydroxymethyl group from 5,10-methylenetetrahydrofolate is transferred onto alpha-ketoisovalerate to form ketopantoate. This chain is 3-methyl-2-oxobutanoate hydroxymethyltransferase, found in Enterobacter sp. (strain 638).